A 372-amino-acid chain; its full sequence is DNA damage-repair/toleration protein DRT100 (372 aa).

The signal sequence occupies residues 1–26 (MRKLLASPFSSLLAVVFISVISVVRC). LRR repeat units follow at residues 136 to 158 (SLRI…IGKL), 160 to 183 (KLAV…TSLI), 184 to 205 (ELKH…DFGS), 208 to 230 (MLSR…ISGM), 232 to 254 (RLAD…MGNM), 256 to 277 (VLSL…SLLS), 280 to 302 (GLDV…FGSK), 304 to 326 (YLVS…LSSA), and 328 to 350 (FVGH…FPFD).

In terms of biological role, this protein is able to complement bacterial recA mutations, but its native function in the plant is not known. The chain is DNA damage-repair/toleration protein DRT100 (DRT100) from Arabidopsis thaliana (Mouse-ear cress).